A 164-amino-acid chain; its full sequence is Phosphopantetheine adenylyltransferase (164 aa).

Ser11 is a binding site for substrate. Residues 11-12 (SF) and His19 each bind ATP. 3 residues coordinate substrate: Lys43, Ala76, and Arg90. ATP is bound by residues 91–93 (GLR), Glu101, and 126–132 (YQHISSS).

The protein belongs to the bacterial CoaD family. In terms of assembly, homohexamer. The cofactor is Mg(2+).

It localises to the cytoplasm. It carries out the reaction (R)-4'-phosphopantetheine + ATP + H(+) = 3'-dephospho-CoA + diphosphate. The protein operates within cofactor biosynthesis; coenzyme A biosynthesis; CoA from (R)-pantothenate: step 4/5. In terms of biological role, reversibly transfers an adenylyl group from ATP to 4'-phosphopantetheine, yielding dephospho-CoA (dPCoA) and pyrophosphate. The protein is Phosphopantetheine adenylyltransferase of Streptococcus gordonii (strain Challis / ATCC 35105 / BCRC 15272 / CH1 / DL1 / V288).